The primary structure comprises 611 residues: MQKHTPSVSCSPFPSSHKFYQQSLLFPNVRVPLRKILLTDGSGESPFNVYDTSGPYTDENVIIDITKGLPAIRIPWLSERADTESYPARLVKPEDNGFTHGKDLTPVFEKKRPILRSKNGKSITQMTYARAGIITAEMEYVAIRENEGLIEKNKQHTTSSKAFDASIPEVYTAEFVRNEIACGRAIIPQNINHPECEPMIIGRNFRVKINANIGNSAVTSSMAEEVEKMVWAIRWGADTVMDLSTGRNIHNIREWIIRNSPVPIGTVPIYQALEKVHGIAENLTWDIFRDTLIEQAEQGVDYFTIHAGLKLAFIPLTIDRTTGIVSRGGSIIAKWCLHHHKENFLYEHFDEICDIAHTYDVSLSLGDGLRPGSIADANDEAQFAELKTLGELTQIAWEKNVQTMIEGPGHVPMHKIKENMDQQLALCNEAPFYTLGPLTTDIAPGYDHITSAIGAAMIGWFGTAMLCYVTPKEHLGLPDKNDVKTGVITYKIAAHAADLAKGLPRAQLRDNTLSRARFDFRWHDQFNLSLDPDTARAFHDETMPKEAHKLAHFCSMCGPKFCSMRISHDIRDAVAIKKTRDEGMAAMAEKYQQNGDLYMKVMPSIKETVDD.

Substrate-binding positions include Asn-212, Met-241, Tyr-270, His-306, 326–328 (SRG), 367–370 (DGLR), and Glu-406. Zn(2+) is bound at residue His-410. Position 433 (Tyr-433) interacts with substrate. Residue His-474 participates in Zn(2+) binding. The [4Fe-4S] cluster site is built by Cys-554, Cys-557, and Cys-562.

Belongs to the ThiC family. As to quaternary structure, homodimer. Requires [4Fe-4S] cluster as cofactor.

It catalyses the reaction 5-amino-1-(5-phospho-beta-D-ribosyl)imidazole + S-adenosyl-L-methionine = 4-amino-2-methyl-5-(phosphooxymethyl)pyrimidine + CO + 5'-deoxyadenosine + formate + L-methionine + 3 H(+). It participates in cofactor biosynthesis; thiamine diphosphate biosynthesis. Its function is as follows. Catalyzes the synthesis of the hydroxymethylpyrimidine phosphate (HMP-P) moiety of thiamine from aminoimidazole ribotide (AIR) in a radical S-adenosyl-L-methionine (SAM)-dependent reaction. This is Phosphomethylpyrimidine synthase from Bartonella bacilliformis (strain ATCC 35685 / KC583 / Herrer 020/F12,63).